The chain runs to 338 residues: Methionine synthase (338 aa).

Residues His210, Cys212, Glu234, and Cys294 each contribute to the Zn(2+) site.

This sequence belongs to the archaeal MetE family. It depends on Zn(2+) as a cofactor.

It functions in the pathway amino-acid biosynthesis; L-methionine biosynthesis via de novo pathway. Catalyzes the transfer of a methyl group to L-homocysteine resulting in methionine formation. The physiological methyl donor is unknown. The chain is Methionine synthase from Pyrococcus horikoshii (strain ATCC 700860 / DSM 12428 / JCM 9974 / NBRC 100139 / OT-3).